Reading from the N-terminus, the 505-residue chain is L-carnitine/gamma-butyrobetaine antiporter (505 aa).

Helical transmembrane passes span 10–30 (IEPK…WLTV), 51–71 (WGWA…WLVF), 92–112 (IFMM…SIEI), 143–163 (GPLP…FFFV), 195–215 (FYLV…TPLV), 231–251 (LDAI…ACGL), 263–283 (SYLS…SFIM), 316–336 (WTVF…IFLA), 347–367 (LCFG…TVLG), 403–423 (LSTA…VTLI), 446–466 (LLVR…LLAL), and 475–495 (AIIA…LSFI).

This sequence belongs to the BCCT transporter (TC 2.A.15) family. CaiT subfamily. In terms of assembly, homotrimer.

Its subcellular location is the cell inner membrane. It catalyses the reaction 4-(trimethylamino)butanoate(in) + (R)-carnitine(out) = 4-(trimethylamino)butanoate(out) + (R)-carnitine(in). Its pathway is amine and polyamine metabolism; carnitine metabolism. Catalyzes the exchange of L-carnitine for gamma-butyrobetaine. This is L-carnitine/gamma-butyrobetaine antiporter from Salmonella agona (strain SL483).